The sequence spans 2146 residues: Conidial pigment polyketide synthase alb1 (2146 aa).

The N-terminal acylcarrier protein transacylase domain (SAT) stretch occupies residues 8 to 244 (YLFGDQTISC…KAPGVSGPYH (237 aa)). The Ketosynthase family 3 (KS3) domain maps to 375–806 (RSKIAIIGMS…GGNTALLMED (432 aa)). Catalysis depends on for beta-ketoacyl synthase activity residues Cys547, His682, and His724. A malonyl-CoA:ACP transacylase (MAT) domain region spans residues 911–1232 (GFVFTGQGAQ…LSTLHLAGVE (322 aa)). The active-site For acyl/malonyl transferase activity is Ser1001. The interval 1290–1602 (TTAAQKIVEC…ARKILDTVLP (313 aa)) is product template (PT) domain. The segment at 1294–1427 (QKIVECREDG…VKLFNCAERE (134 aa)) is N-terminal hotdog fold. The 305-residue stretch at 1294–1598 (QKIVECREDG…FQALARKILD (305 aa)) folds into the PKS/mFAS DH domain. The Proton acceptor; for dehydratase activity role is filled by His1326. The C-terminal hotdog fold stretch occupies residues 1453-1598 (AHRMQRGMVY…FQALARKILD (146 aa)). The active-site Proton donor; for dehydratase activity is Asp1511. Residues 1611–1644 (GAPAPAPARPIGEKKAPPPIKVTGPPKPNPSNAR) form a disordered region. The span at 1627 to 1639 (PPPIKVTGPPKPN) shows a compositional bias: pro residues. The Carrier 1 domain occupies 1647–1721 (SPVVARALEI…DFKAYLAEKG (75 aa)). The residue at position 1681 (Ser1681) is an O-(pantetheine 4'-phosphoryl)serine. Residues 1724–1769 (DSSSPEPSSEPESKFSFNSDASSEASSGLTTPGITSPVKHEAPKGG) are disordered. Positions 1738-1750 (FSFNSDASSEASS) are enriched in low complexity. The 78-residue stretch at 1768–1845 (GGQNKVWKSI…AVQAALDLKP (78 aa)) folds into the Carrier 2 domain. Ser1805 carries the O-(pantetheine 4'-phosphoryl)serine modification. Positions 1892 to 2019 (KLFMFPDGSG…SIGLFGDGKR (128 aa)) are claisen cyclase domain. The For Claisen cyclase activity role is filled by Ser1962.

Its subcellular location is the endosome. It catalyses the reaction 6 malonyl-CoA + acetyl-CoA + 6 H(+) = naphtopyrone YWA1 + 6 CO2 + 7 CoA + H2O. The protein operates within pigment biosynthesis; melanin biosynthesis. Functionally, non-reducing polyketide synthase; part of the gene cluster that mediates the biosynthesis of dihydroxynaphthalene (DHN)-melanin, a bluish-green pigment and a structural component of the conidial wall. The first step of the pathway is the production of the heptaketide naphtopyrone YWA1 by the polyketide synthase alb1 though condensation of acetyl-CoA with malonyl-CoA. The naphtopyrone YWA1 is then converted to the pentaketide 1,3,6,8-tetrahydroxynaphthalene (1,3,6,8-THN) by the heptaketide hydrolyase ayg1 though chain-length shortening. 1,3,6,8-THN is substrate of the hydroxynaphthalene reductase arp2 to yield scytalone. The scytalone dehydratase arp1 then reduces scytalone to 1,3,8-THN. 1,3,8-THN is also substrate of the hydroxynaphthalene reductase arp2 to yield vermelone. Vermelone is further converted by the multicopper oxidase abr1 to 1,8-DHN. Finally the laccase abr2 transforms 1,8-DHN to DHN-melanin. DHN-melanin biosynthesis appears to be initiated in endosomes where early enzymes (abl1, ayg1, arp1 and arp2) localize, with exocytosis leading to melanin deposition on the cell surface where late enzymes (abr1 and abr2) localize. DHN-melanin is an important structural component of the outer cell wall and is required for the presence of conidial surface hydrophobins. DHN-melanin also plays a crucial role in fungal virulence, including a protective role against the host's immune defenses. DHN-melanin protects also conidia against amoeba predation. This is Conidial pigment polyketide synthase alb1 from Aspergillus fumigatus (strain ATCC MYA-4609 / CBS 101355 / FGSC A1100 / Af293) (Neosartorya fumigata).